A 273-amino-acid chain; its full sequence is Eukaryotic translation initiation factor 3 subunit G-2 (273 aa).

Residues 193 to 271 (SAVRISNLSE…LILCVEWSKP (79 aa)) form the RRM domain.

Belongs to the eIF-3 subunit G family. In terms of assembly, component of the eukaryotic translation initiation factor 3 (eIF-3) complex. The eIF-3 complex interacts with pix.

It is found in the cytoplasm. Its function is as follows. RNA-binding component of the eukaryotic translation initiation factor 3 (eIF-3) complex, which is involved in protein synthesis of a specialized repertoire of mRNAs and, together with other initiation factors, stimulates binding of mRNA and methionyl-tRNAi to the 40S ribosome. The eIF-3 complex specifically targets and initiates translation of a subset of mRNAs involved in cell proliferation. This subunit can bind 18S rRNA. The protein is Eukaryotic translation initiation factor 3 subunit G-2 of Drosophila melanogaster (Fruit fly).